Here is a 351-residue protein sequence, read N- to C-terminus: DNA polymerase IV (351 aa).

The 182-residue stretch at 4-185 folds into the UmuC domain; sequence IIHVDMDCFY…LPLGKIPGVG (182 aa). 2 residues coordinate Mg(2+): D8 and D103. The active site involves E104.

This sequence belongs to the DNA polymerase type-Y family. Monomer. It depends on Mg(2+) as a cofactor.

It localises to the cytoplasm. It catalyses the reaction DNA(n) + a 2'-deoxyribonucleoside 5'-triphosphate = DNA(n+1) + diphosphate. In terms of biological role, poorly processive, error-prone DNA polymerase involved in untargeted mutagenesis. Copies undamaged DNA at stalled replication forks, which arise in vivo from mismatched or misaligned primer ends. These misaligned primers can be extended by PolIV. Exhibits no 3'-5' exonuclease (proofreading) activity. May be involved in translesional synthesis, in conjunction with the beta clamp from PolIII. This chain is DNA polymerase IV, found in Citrobacter koseri (strain ATCC BAA-895 / CDC 4225-83 / SGSC4696).